Reading from the N-terminus, the 281-residue chain is Leukocyte antigen CD37 (281 aa).

At 1 to 17 (MSAQESCLSLIKYFLFV) the chain is on the cytoplasmic side. A helical transmembrane segment spans residues 18–38 (FNLFFFVLGGLIFCFGTWILI). At 39–59 (DKTSFVSFVGLSFVPLQTWSK) the chain is on the extracellular side. Residues 60-74 (VLSVSGVLTMALALL) form a helical membrane-spanning segment. Residues 75 to 85 (GCVGALKELRC) lie on the Cytoplasmic side of the membrane. The helical transmembrane segment at 86–111 (LLGLYFGMLLLLFATQITLGILISTQ) threads the bilayer. Residues 112–241 (RVRLERRVQE…RSLQKWLHNN (130 aa)) lie on the Extracellular side of the membrane. Residues asparagine 170, asparagine 183, and asparagine 188 are each glycosylated (N-linked (GlcNAc...) asparagine). A helical membrane pass occupies residues 242 to 266 (IISIVGICLGVGLLELGFMTLSIFL). Topologically, residues 267-281 (CRNLDHVYDRLARYR) are cytoplasmic.

Belongs to the tetraspanin (TM4SF) family. As to quaternary structure, interacts with SCIMP. Interacts with SOCS3. Interacts with DECTIN1/CLEC7A. Tyrosine phosphorylated; leading to activation of downstream signaling pathways. B-lymphocytes.

The protein localises to the cell membrane. Functionally, structural component of specialized membrane microdomains known as tetraspanin-enriched microdomains (TERMs), which act as platforms for receptor clustering and signaling. Participates thereby in diverse biological functions such as cell signal transduction, adhesion, migration and protein trafficking. Upon ligand binding, two signaling pathways are activated, one acting through phosphorylation by LYN leading to cell death or a survival pathway with activation of GSK3B. Plays an essential role essential for clustering of integrin ITGA4/ITGB1 and promotes its mobility in the plasma membrane of B-cells. In turn, participates in ITGA4/ITGB1 integrin-mediated antiapoptotic signaling through AKT. Plays also a role in the migration of dendritic cells and neutrophils to draining lymph nodes, as well as in their integrin-mediated adhesion. Negatively regulates IL-6 responses through direct interaction with SOCS3 thereby preventing constitutive IL-6 signaling. Alternatively, inhibition of IL-6 signaling can also occur via interaction and stabilization of DECTIN1/CLEC7A at the cell membrane to inhibit its ability to promote the production of IL-6. This Rattus norvegicus (Rat) protein is Leukocyte antigen CD37 (Cd37).